The primary structure comprises 835 residues: Ribonuclease R (835 aa).

An RNB domain is found at 267-593 (RVDLRELPLV…LLHRAIKYLI (327 aa)). The 82-residue stretch at 652 to 733 (GDELEGVIAN…DDKQIDFELV (82 aa)) folds into the S1 motif domain. Basic and acidic residues predominate over residues 739–754 (LRGEGKTAKKRAAEAK). Residues 739-835 (LRGEGKTAKK…KTKRTKQDAQ (97 aa)) form a disordered region. Basic residues predominate over residues 755 to 764 (RKAKEKKRAA). A compositionally biased stretch (low complexity) spans 765–777 (TRSSSKESATARA). Over residues 783-793 (PTKRPEQTDSG) the composition is skewed to basic and acidic residues. The span at 809-829 (KPKVKKAHKKKPHSKPKKTKR) shows a compositional bias: basic residues.

Belongs to the RNR ribonuclease family. RNase R subfamily.

It localises to the cytoplasm. It catalyses the reaction Exonucleolytic cleavage in the 3'- to 5'-direction to yield nucleoside 5'-phosphates.. In terms of biological role, 3'-5' exoribonuclease that releases 5'-nucleoside monophosphates and is involved in maturation of structured RNAs. This Vibrio parahaemolyticus serotype O3:K6 (strain RIMD 2210633) protein is Ribonuclease R.